Consider the following 361-residue polypeptide: Ribosomal RNA large subunit methyltransferase M (361 aa).

Residues serine 190, 223–226 (CPGG), aspartate 242, aspartate 262, and aspartate 280 contribute to the S-adenosyl-L-methionine site. Residue lysine 309 is the Proton acceptor of the active site.

Belongs to the class I-like SAM-binding methyltransferase superfamily. RNA methyltransferase RlmE family. RlmM subfamily. Monomer.

The protein localises to the cytoplasm. It catalyses the reaction cytidine(2498) in 23S rRNA + S-adenosyl-L-methionine = 2'-O-methylcytidine(2498) in 23S rRNA + S-adenosyl-L-homocysteine + H(+). Catalyzes the 2'-O-methylation at nucleotide C2498 in 23S rRNA. This is Ribosomal RNA large subunit methyltransferase M from Actinobacillus pleuropneumoniae serotype 7 (strain AP76).